The chain runs to 354 residues: S-adenosylmethionine:tRNA ribosyltransferase-isomerase (354 aa).

It belongs to the QueA family. As to quaternary structure, monomer.

The protein localises to the cytoplasm. The enzyme catalyses 7-aminomethyl-7-carbaguanosine(34) in tRNA + S-adenosyl-L-methionine = epoxyqueuosine(34) in tRNA + adenine + L-methionine + 2 H(+). Its pathway is tRNA modification; tRNA-queuosine biosynthesis. Its function is as follows. Transfers and isomerizes the ribose moiety from AdoMet to the 7-aminomethyl group of 7-deazaguanine (preQ1-tRNA) to give epoxyqueuosine (oQ-tRNA). The sequence is that of S-adenosylmethionine:tRNA ribosyltransferase-isomerase from Salmonella gallinarum (strain 287/91 / NCTC 13346).